A 307-amino-acid chain; its full sequence is Elongation factor Ts (307 aa).

The tract at residues 80–83 is involved in Mg(2+) ion dislocation from EF-Tu; the sequence is TDFV.

Belongs to the EF-Ts family.

The protein localises to the cytoplasm. Functionally, associates with the EF-Tu.GDP complex and induces the exchange of GDP to GTP. It remains bound to the aminoacyl-tRNA.EF-Tu.GTP complex up to the GTP hydrolysis stage on the ribosome. The chain is Elongation factor Ts from Rhizorhabdus wittichii (strain DSM 6014 / CCUG 31198 / JCM 15750 / NBRC 105917 / EY 4224 / RW1) (Sphingomonas wittichii).